A 207-amino-acid polypeptide reads, in one-letter code: Myosin light chain 6B (207 aa).

The disordered stretch occupies residues 1-50 (MPPKKDAPVKKPAGPSISKPAAKSTPGTPLAKAKAEPAAPQAPAKSQEPP). Residues 36–50 (EPAAPQAPAKSQEPP) show a composition bias toward low complexity. EF-hand domains lie at 63–98 (DQLEEFREAFELFDRVGDGKILYSQCGDLMRALGQN), 140–175 (GTYEDYLEGLRVFDKEGNGKVMGAELRHVLTTLGEK), and 175–207 (KMTEEEVETVLAGHEDSNGCINYEAFLKHILSL).

In terms of assembly, myosin is a hexamer of 2 heavy chains and 4 light chains.

Its function is as follows. Regulatory light chain of myosin. Does not bind calcium. This chain is Myosin light chain 6B, found in Mus musculus (Mouse).